Consider the following 251-residue polypeptide: MNLNSIPAFDDNYIWVLNDEAGRCLIVDPGDAEPVLNAITANNWQPEAIFLTHHHHDHVGGVKELVEKFPQIVVYGPQETQDKGTTQVVKDGETAFVLGHEFSVIATPGHTLGHICYFSKPYLFCGDTLFSGGCGRLFEGTASQMYQSLNKLSALPDDTLVCCAHEYTLSNMKFALSILPHDLSINDYYRKVKELRAKNQITLPVILKNERQINVFLRTEDIDLINVINEETLLQQPEERFAWLRSKKDRF.

Residues His-53, His-55, Asp-57, His-58, His-110, Asp-127, and His-165 each contribute to the Zn(2+) site.

This sequence belongs to the metallo-beta-lactamase superfamily. Glyoxalase II family. As to quaternary structure, monomer. The cofactor is Zn(2+).

It carries out the reaction an S-(2-hydroxyacyl)glutathione + H2O = a 2-hydroxy carboxylate + glutathione + H(+). Its pathway is secondary metabolite metabolism; methylglyoxal degradation; (R)-lactate from methylglyoxal: step 2/2. In terms of biological role, thiolesterase that catalyzes the hydrolysis of S-D-lactoyl-glutathione to form glutathione and D-lactic acid. This Escherichia coli (strain 55989 / EAEC) protein is Hydroxyacylglutathione hydrolase.